The sequence spans 208 residues: Ribosomal RNA small subunit methyltransferase G (208 aa).

S-adenosyl-L-methionine contacts are provided by residues Gly78, Phe83, 101-103 (ERS), 129-130 (IE), and Arg142.

Belongs to the methyltransferase superfamily. RNA methyltransferase RsmG family.

Its subcellular location is the cytoplasm. Specifically methylates the N7 position of a guanine in 16S rRNA. The protein is Ribosomal RNA small subunit methyltransferase G of Borrelia garinii subsp. bavariensis (strain ATCC BAA-2496 / DSM 23469 / PBi) (Borreliella bavariensis).